The primary structure comprises 233 residues: Ubiquinone biosynthesis O-methyltransferase (233 aa).

Residues Arg-37, Gly-56, Asp-77, and Met-121 each coordinate S-adenosyl-L-methionine.

It belongs to the methyltransferase superfamily. UbiG/COQ3 family.

It carries out the reaction a 3-demethylubiquinol + S-adenosyl-L-methionine = a ubiquinol + S-adenosyl-L-homocysteine + H(+). The enzyme catalyses a 3-(all-trans-polyprenyl)benzene-1,2-diol + S-adenosyl-L-methionine = a 2-methoxy-6-(all-trans-polyprenyl)phenol + S-adenosyl-L-homocysteine + H(+). Its pathway is cofactor biosynthesis; ubiquinone biosynthesis. In terms of biological role, O-methyltransferase that catalyzes the 2 O-methylation steps in the ubiquinone biosynthetic pathway. The chain is Ubiquinone biosynthesis O-methyltransferase from Azoarcus sp. (strain BH72).